A 722-amino-acid polypeptide reads, in one-letter code: Zinc finger BED domain-containing protein RICESLEEPER 1 (722 aa).

Residues 66–126 (RKKSLVWEHF…GSCPKIKNQE (61 aa)) form a BED-type zinc finger. Zn(2+)-binding residues include C89, C92, H113, and C119. The disordered stretch occupies residues 572-592 (VEQGGGNNAPASENSTQATAP). The segment covering 580–592 (APASENSTQATAP) has biased composition (polar residues). The interval 617–702 (ELEQYLDESL…EALVCAKDWL (86 aa)) is HATC (Hobo-Ac-Tam3) domain.

As to quaternary structure, homodimer.

It localises to the nucleus. Its function is as follows. Transposase-like protein that is essential for plant growth and development. May regulate global gene expression by recruiting other cellular factors. In Oryza sativa subsp. japonica (Rice), this protein is Zinc finger BED domain-containing protein RICESLEEPER 1.